Consider the following 386-residue polypeptide: Acetylornithine aminotransferase (386 aa).

Pyridoxal 5'-phosphate is bound by residues 94 to 95 and Phe-121; that span reads GT. A N(2)-acetyl-L-ornithine-binding site is contributed by Arg-124. 206 to 209 is a binding site for pyridoxal 5'-phosphate; that stretch reads DEVQ. N6-(pyridoxal phosphate)lysine is present on Lys-235. Ser-263 lines the N(2)-acetyl-L-ornithine pocket. Thr-264 is a pyridoxal 5'-phosphate binding site.

This sequence belongs to the class-III pyridoxal-phosphate-dependent aminotransferase family. ArgD subfamily. Homodimer. Requires pyridoxal 5'-phosphate as cofactor.

It localises to the cytoplasm. It catalyses the reaction N(2)-acetyl-L-ornithine + 2-oxoglutarate = N-acetyl-L-glutamate 5-semialdehyde + L-glutamate. It functions in the pathway amino-acid biosynthesis; L-arginine biosynthesis; N(2)-acetyl-L-ornithine from L-glutamate: step 4/4. This is Acetylornithine aminotransferase from Listeria monocytogenes serotype 4b (strain F2365).